The chain runs to 453 residues: Phenolic glucoside malonyltransferase 1 (453 aa).

H165 (proton acceptor) is an active-site residue. An HXXXD motif motif is present at residues 165–169 (HVAGD). Malonyl-CoA-binding positions include K254, H266, and 268–269 (TS). D394 (proton acceptor) is an active-site residue. The short motif at 394-398 (DFGWG) is the DFGWG motif element.

This sequence belongs to the plant acyltransferase family. Phenolic glucoside malonyltransferase subfamily. In terms of assembly, monomer. Highly expressed in flower. Also expressed in flower bud, stem, root and leaf.

It carries out the reaction a flavonol 3-O-beta-D-glucoside + malonyl-CoA = a flavonol 3-O-(6-O-malonyl-beta-D-glucoside) + CoA. The catalysed reaction is a flavonol 7-O-beta-D-glucoside + malonyl-CoA = a flavonol 7-O-(6-O-malonyl-beta-D-glucoside) + CoA. Its function is as follows. Malonyltransferase with broad substrate specificity acting on phenolic glucosides including xenobiotic naphthols. Has activity against flavonoid 7-O-glucosides, flavonoid 3-O-glucosides and naphthol glucosides, and to a lesser extent against coumarin glucosides in vitro. Prefers malonyl-CoA as an acyl donor, but also active with succinyl-CoA and methylmalonyl-CoA, but not with acetyl-CoA. The chain is Phenolic glucoside malonyltransferase 1 from Nicotiana tabacum (Common tobacco).